Reading from the N-terminus, the 327-residue chain is Gamma-gliadin (327 aa).

The N-terminal stretch at 1 to 19 is a signal peptide; that stretch reads MKTLLILTILAMAITIGTA. The span at 42–81 shows a compositional bias: low complexity; it reads QPLSQQPQQTFPQPQQTFPHQPQQQVPQPQQPQQPFLQPQ. A disordered region spans residues 42–169; that stretch reads QPLSQQPQQT…QPQQSFPQQQ (128 aa). 3 stretches are compositionally biased toward pro residues: residues 82–91, 100–109, and 118–127; these read QPFPQQPQQP. Residues 128-169 show a composition bias toward low complexity; sequence FPQTQQPQQPFPQLQQPQQPFPQPQQQLPQPQQPQQSFPQQQ.

This sequence belongs to the gliadin/glutenin family.

Its function is as follows. Gliadin is the major seed storage protein in wheat. This Triticum aestivum (Wheat) protein is Gamma-gliadin.